The primary structure comprises 122 residues: Flagellar protein FliT (122 aa).

The interval 1 to 50 is required for homodimerization; that stretch reads MTSTVEFINRWQRIALLSQSLLELAQRGEWDLLLQQEVSYLQRIETVMEK. The interval 60 to 98 is fliD binding; sequence IQDMVAGYIKQTLDNEQLLKGLLQQRLDELSSLIGQSTR.

The protein belongs to the FliT family. Homodimer. Interacts with FliD and FlhC.

It localises to the cytoplasm. Its subcellular location is the cytosol. Functionally, dual-function protein that regulates the transcription of class 2 flagellar operons and that also acts as an export chaperone for the filament-capping protein FliD. As a transcriptional regulator, acts as an anti-FlhDC factor; it directly binds FlhC, thus inhibiting the binding of the FlhC/FlhD complex to class 2 promoters, resulting in decreased expression of class 2 flagellar operons. As a chaperone, effects FliD transition to the membrane by preventing its premature polymerization, and by directing it to the export apparatus. This chain is Flagellar protein FliT, found in Salmonella paratyphi A (strain AKU_12601).